The chain runs to 764 residues: Protective antigen (764 aa).

Residues 1-29 form the signal peptide; it reads MKKRKVLIPLMALSTILVSSTGNLEVIQA. The tract at residues 30 to 287 is domain 1, calcium-binding; LF and EF binding sites; sequence EVKQENRLLN…PEARHPLVAA (258 aa). The PA14 domain occupies 43-179; it reads SSSQGLLGYY…NKKEVISSDN (137 aa). A disordered region spans residues 176 to 214; sequence SSDNLQLPELKQKSSNSRKKRSTSAGPTVPDRDNDGIPD. Residues D206, D208, D210, I212, and E217 each contribute to the Ca(2+) site. The alpha-clamp stretch occupies residues 231-239; the sequence is FLSPWISNI. Positions 251, 254, and 264 each coordinate Ca(2+). The domain 2, membrane insertion and heptamerization stretch occupies residues 288–516; it reads YPIVHVDMEN…SEVLPQIQET (229 aa). The tract at residues 302–333 is disordered; that stretch reads KNEDQSTQNTDSQTRTISKNTSTSRTHTSEVH. Polar residues predominate over residues 306–327; that stretch reads QSTQNTDSQTRTISKNTSTSRT. The next 2 beta stranded transmembrane spans lie at 331–342 and 345–354; these read EVHGNAEVHASF and IGGSVSAGFS. The tract at residues 517 to 624 is domain 3, heptamerization; that stretch reads TARIIFNGKD…KMNILIRDKR (108 aa). The segment at 625–764 is domain 4, binding to the receptor; that stretch reads FHYDRNNIAV…IFSKKGYEIG (140 aa).

It belongs to the bacterial binary toxin family. As to quaternary structure, interacts with host ANTXR1 and ANTXR2. Homooligomer; homooligomerizes to form homoheptamers (PA-63(7)) or homooctamers (PA-63(8)). PA-63(7) or PA-63(8) form ring-shaped oligomers that are in a pre-pore conformation, which do not penetrate the host membrane. PA-63(8) displays an enhanced stability, suggesting that this form circulates in the blood to reach and exert toxicity even in distant tissues. Interacts with lethal factor (LF) and edema factor (EF); can bind LF and EF simultaneously and interaction takes place following homooligomerization on the host cell membrane. PA-63(7) homoheptamer interacts with three molecules of LF to form the PA(7)LF(3) complex, in which the relative position of the N-terminal alpha-helices in the three LFs determines which factor is translocated first. Proteolytic activation by FURIN cleaves the protein in two parts, PA-20 and PA-63; the latter is the mature protein. The cleavage occurs at the cell surface and probably in the serum of infected animals as well; both native and cleaved PA are able to bind to the cell receptor. The release of PA-20 from the remaining receptor-bound PA-63 exposes the binding site for EF and LF, and promotes oligomerization and internalization of the protein.

Its subcellular location is the secreted. The protein resides in the host cell membrane. It is found in the host endosome membrane. In terms of biological role, protective antigen constitutes one of the three proteins composing the anthrax toxin; it mediates attachment to host cells and translocation of edema factor (EF) and lethal factor (LF) into the host cytoplasm. PA associated with LF forms the lethal toxin (LeTx) and causes death when injected; PA associated with EF forms the edema toxin (EdTx) and produces edema. PA induces immunity to infection with anthrax. Mediates the attachment to host cells by binding host cell receptors ANTXR1 and ANTXR2. Following host cell surface attachment, PA is cleaved by FURIN to generate the PA-63 (Protective antigen PA-63) form, which constitutes the mature form of the protein that oligomerizes and forms a pore to translocate the enzymatic toxin components edema factor (EF) and lethal factor (LF) into the host cytosol. Functionally, mature form that oligomerizes and forms a pore to translocate the enzymatic toxin components edema factor (EF) and lethal factor (LF) into the host cytosol. Following attachment to host cell receptors and cleavage by FURIN, homooligomerizes to form ring-shaped oligomers that are in a pre-pore conformation, and associates with EF and LF. Toxin-leaded complexes are then endocytosed in a clathrin-dependent process, followed by a conformational change of oligomerized PA-63 from the pre-pore to pore state, which is triggered by the low pH in the endosome. Once active, the pore mediates unfolding of EF and LF, which pass through the pore and translocate into the host cytosol. The chain is Protective antigen (pagA) from Bacillus anthracis.